We begin with the raw amino-acid sequence, 196 residues long: SPRY domain-containing protein 7 (196 aa).

Residue A2 is modified to N-acetylalanine. Residues 2–184 (ATSVLCCLRC…FSEFYHTPPP (183 aa)) enclose the B30.2/SPRY domain.

This Homo sapiens (Human) protein is SPRY domain-containing protein 7 (SPRYD7).